A 216-amino-acid chain; its full sequence is Large ribosomal subunit protein bL25 (216 aa).

The segment at 184-216 (VPPTSDVEEEEGDEDLEEDVEETAAEEEEGVEE) is disordered. Acidic residues predominate over residues 189-216 (DVEEEEGDEDLEEDVEETAAEEEEGVEE).

Belongs to the bacterial ribosomal protein bL25 family. CTC subfamily. In terms of assembly, part of the 50S ribosomal subunit; part of the 5S rRNA/L5/L18/L25 subcomplex. Contacts the 5S rRNA. Binds to the 5S rRNA independently of L5 and L18.

Its function is as follows. This is one of the proteins that binds to the 5S RNA in the ribosome where it forms part of the central protuberance. The polypeptide is Large ribosomal subunit protein bL25 (Desulforapulum autotrophicum (strain ATCC 43914 / DSM 3382 / VKM B-1955 / HRM2) (Desulfobacterium autotrophicum)).